The primary structure comprises 297 residues: 4-diphosphocytidyl-2-C-methyl-D-erythritol kinase (297 aa).

The active site involves Lys10. 94-104 contacts ATP; it reads PVAAGLAGGSS. The active site involves Asp136.

It belongs to the GHMP kinase family. IspE subfamily.

The catalysed reaction is 4-CDP-2-C-methyl-D-erythritol + ATP = 4-CDP-2-C-methyl-D-erythritol 2-phosphate + ADP + H(+). It participates in isoprenoid biosynthesis; isopentenyl diphosphate biosynthesis via DXP pathway; isopentenyl diphosphate from 1-deoxy-D-xylulose 5-phosphate: step 3/6. Catalyzes the phosphorylation of the position 2 hydroxy group of 4-diphosphocytidyl-2C-methyl-D-erythritol. The protein is 4-diphosphocytidyl-2-C-methyl-D-erythritol kinase of Shouchella clausii (strain KSM-K16) (Alkalihalobacillus clausii).